A 1155-amino-acid chain; its full sequence is RHO1 GDP-GTP exchange protein 1 (1155 aa).

Met1 bears the N-acetylmethionine mark. Residues Asn100–Ser143 show a composition bias toward polar residues. The tract at residues Asn100 to Ser249 is disordered. A phosphoserine mark is found at Ser154 and Ser155. Residues Ser155 to Ser167 show a composition bias toward low complexity. Thr180 carries the post-translational modification Phosphothreonine. The segment covering Leu190 to Ser227 has biased composition (low complexity). Positions Gln228 to Ser243 are enriched in basic residues. Ser433 is modified (phosphoserine). A DH domain is found at Lys464–Ala651. A CNH domain is found at Thr842–Ile1137.

Stimulates the exchange of RHO1 GDP-bound form into GTP-bound form. This is RHO1 GDP-GTP exchange protein 1 (ROM1) from Saccharomyces cerevisiae (strain ATCC 204508 / S288c) (Baker's yeast).